The primary structure comprises 388 residues: Succinate--CoA ligase [ADP-forming] subunit beta (388 aa).

The 236-residue stretch at 9-244 folds into the ATP-grasp domain; it reads KQLFARYGMP…KSQEDEREAQ (236 aa). ATP is bound by residues lysine 46, 53 to 55, glutamate 99, threonine 102, and glutamate 107; that span reads GRG. Mg(2+) is bound by residues asparagine 199 and aspartate 213. Residues asparagine 264 and 321–323 each bind substrate; that span reads GIV.

The protein belongs to the succinate/malate CoA ligase beta subunit family. Heterotetramer of two alpha and two beta subunits. It depends on Mg(2+) as a cofactor.

It catalyses the reaction succinate + ATP + CoA = succinyl-CoA + ADP + phosphate. The catalysed reaction is GTP + succinate + CoA = succinyl-CoA + GDP + phosphate. It participates in carbohydrate metabolism; tricarboxylic acid cycle; succinate from succinyl-CoA (ligase route): step 1/1. Functionally, succinyl-CoA synthetase functions in the citric acid cycle (TCA), coupling the hydrolysis of succinyl-CoA to the synthesis of either ATP or GTP and thus represents the only step of substrate-level phosphorylation in the TCA. The beta subunit provides nucleotide specificity of the enzyme and binds the substrate succinate, while the binding sites for coenzyme A and phosphate are found in the alpha subunit. The chain is Succinate--CoA ligase [ADP-forming] subunit beta from Yersinia enterocolitica serotype O:8 / biotype 1B (strain NCTC 13174 / 8081).